The sequence spans 329 residues: PTS-dependent dihydroxyacetone kinase 1, dihydroxyacetone-binding subunit DhaK (329 aa).

The region spanning 7-329 (GTDQVVEQMV…LKLPVDTIAW (323 aa)) is the DhaK domain. Residues 53-56 (GSGH), Lys104, and Asp109 contribute to the dihydroxyacetone site. His56 (proton acceptor) is an active-site residue. His218 (tele-hemiaminal-histidine intermediate) is an active-site residue.

In terms of assembly, homodimer. The dihydroxyacetone kinase complex is composed of a homodimer of DhaM, a homodimer of DhaK and the subunit DhaL.

It is found in the cytoplasm. The catalysed reaction is dihydroxyacetone + phosphoenolpyruvate = dihydroxyacetone phosphate + pyruvate. It functions in the pathway polyol metabolism; glycerol degradation. Its function is as follows. Dihydroxyacetone binding subunit of the dihydroxyacetone kinase, which is responsible for the phosphoenolpyruvate (PEP)-dependent phosphorylation of dihydroxyacetone via a phosphoryl group transfer from DhaL-ATP. This chain is PTS-dependent dihydroxyacetone kinase 1, dihydroxyacetone-binding subunit DhaK, found in Listeria innocua serovar 6a (strain ATCC BAA-680 / CLIP 11262).